A 211-amino-acid chain; its full sequence is MQRMIEISSPFFLNPDELSTPADWAAVFGNANPLALEIGCGIGDFIARTAADNPGTNYIAIDFYNKGCDKTCRRLERLAIPNVRVVRDEARKFIVERIPKGSLCAVHINCPDPWPKMRHRKRRLVNREFAAFIREYLAPGGDFYFATDFDDYGIDVAEFMPGVEGYANMLAPDRYRHELEGYHLSKYMMKFMAEGKRIYFVHYRKTAEGAA.

The S-adenosyl-L-methionine site is built by Glu-37, Asp-62, Glu-89, and Asp-112. Asp-112 is a catalytic residue. Substrate-binding residues include Lys-116 and Asp-148.

Belongs to the class I-like SAM-binding methyltransferase superfamily. TrmB family.

The catalysed reaction is guanosine(46) in tRNA + S-adenosyl-L-methionine = N(7)-methylguanosine(46) in tRNA + S-adenosyl-L-homocysteine. The protein operates within tRNA modification; N(7)-methylguanine-tRNA biosynthesis. In terms of biological role, catalyzes the formation of N(7)-methylguanine at position 46 (m7G46) in tRNA. The polypeptide is tRNA (guanine-N(7)-)-methyltransferase (Geobacter metallireducens (strain ATCC 53774 / DSM 7210 / GS-15)).